A 569-amino-acid chain; its full sequence is Estrogen receptor (569 aa).

Residues 1–151 (MYPKEEHSAG…GFDSGKETRF (151 aa)) form a modulating region. Residues 28-37 (PTQTFGTSSP) are compositionally biased toward polar residues. The interval 28 to 65 (PTQTFGTSSPAEPASVGYYPAPPDPHEEHLQTLGGGSS) is disordered. 2 NR C4-type zinc fingers span residues 152–172 (CAVCSDYASGYHYGVWSCEGC) and 188–212 (CPATNQCTIDRNRRKSCQACRLRKC). Positions 152–217 (CAVCSDYASG…RLRKCYEVGM (66 aa)) form a DNA-binding region, nuclear receptor. The tract at residues 218-278 (MKGGIRKDRG…SGGVVSTLCM (61 aa)) is hinge. The tract at residues 223–271 (RKDRGGRSVRRERRRSSNEDRDKSSSDQCSRAGVRTTGPQDKRKKRSGG) is disordered. Residues 237-247 (RSSNEDRDKSS) are compositionally biased toward basic and acidic residues. The NR LBD domain occupies 279-515 (SPDQVLLLLL…DLLLEMLDAQ (237 aa)). The segment covering 523–532 (VQRVWSQSEK) has biased composition (polar residues). A disordered region spans residues 523–569 (VQRVWSQSEKNPPSTPTTSSSSSNNSPRGGAAAIQSNGACHSHSPDP). Residues 538–549 (PTTSSSSSNNSP) show a composition bias toward low complexity.

Belongs to the nuclear hormone receptor family. NR3 subfamily. In terms of assembly, binds DNA as a homodimer. Can form a heterodimer with ER-beta.

It localises to the nucleus. Its function is as follows. The steroid hormones and their receptors are involved in the regulation of eukaryotic gene expression and affect cellular proliferation and differentiation in target tissues. The protein is Estrogen receptor (esr1) of Danio rerio (Zebrafish).